We begin with the raw amino-acid sequence, 356 residues long: Leucine carboxyl methyltransferase 1 (356 aa).

Residues Arg-78, Gly-101, Asp-127, 183–184, and Glu-218 each bind S-adenosyl-L-methionine; that span reads DL.

The protein belongs to the methyltransferase superfamily. LCMT family.

The catalysed reaction is [phosphatase 2A protein]-C-terminal L-leucine + S-adenosyl-L-methionine = [phosphatase 2A protein]-C-terminal L-leucine methyl ester + S-adenosyl-L-homocysteine. Functionally, methylates the carboxyl group of the C-terminal leucine residue of protein phosphatase 2A catalytic subunits to form alpha-leucine ester residues. The polypeptide is Leucine carboxyl methyltransferase 1 (PPM1) (Cryptococcus neoformans var. neoformans serotype D (strain JEC21 / ATCC MYA-565) (Filobasidiella neoformans)).